Here is a 140-residue protein sequence, read N- to C-terminus: Anti-sigma F factor (140 aa).

This sequence belongs to the anti-sigma-factor family.

It catalyses the reaction L-seryl-[protein] + ATP = O-phospho-L-seryl-[protein] + ADP + H(+). The enzyme catalyses L-threonyl-[protein] + ATP = O-phospho-L-threonyl-[protein] + ADP + H(+). Its function is as follows. Binds to sigma F and blocks its ability to form an RNA polymerase holoenzyme (E-sigma F). Phosphorylates SpoIIAA on a serine residue. This phosphorylation may enable SpoIIAA to act as an anti-anti-sigma factor that counteracts SpoIIAB and thus releases sigma F from inhibition. This Clostridium perfringens (strain ATCC 13124 / DSM 756 / JCM 1290 / NCIMB 6125 / NCTC 8237 / Type A) protein is Anti-sigma F factor.